The following is a 30-amino-acid chain: NADH-ubiquinone oxidoreductase 18 kDa subunit (30 aa).

In terms of assembly, complex I is composed of about 45 different subunits.

It localises to the mitochondrion inner membrane. The catalysed reaction is a ubiquinone + NADH + 5 H(+)(in) = a ubiquinol + NAD(+) + 4 H(+)(out). Transfer of electrons from NADH to the respiratory chain. The immediate electron acceptor for the enzyme is believed to be ubiquinone. This is NADH-ubiquinone oxidoreductase 18 kDa subunit from Solanum tuberosum (Potato).